A 775-amino-acid chain; its full sequence is Chondroitin sulfate synthase 2 (775 aa).

Topologically, residues 1–15 are cytoplasmic; that stretch reads MRASLLLSVLRPAGP. A helical; Signal-anchor for type II membrane protein membrane pass occupies residues 16-34; sequence VAVGISLGFTLSLLSVTWV. Topologically, residues 35 to 775 are lumenal; sequence EEPCGPGPPQ…LFEQEQGNST (741 aa). The interval 37 to 100 is disordered; it reads PCGPGPPQPG…YHPAQPGQAA (64 aa). Residues 54–66 show a composition bias toward polar residues; sequence GNTNAARRPNSVQ. Asparagine 138 and asparagine 361 each carry an N-linked (GlcNAc...) asparagine glycan. Position 617 (aspartate 617) interacts with a divalent metal cation.

Belongs to the chondroitin N-acetylgalactosaminyltransferase family. As to quaternary structure, interacts with PRKN. Mn(2+) serves as cofactor. It depends on Co(2+) as a cofactor. Ubiquitous. Highly expressed in pancreas, ovary, brain, heart, skeletal muscle, colon, kidney, liver, stomach, spleen and placenta. In terms of tissue distribution, expressed in brain, spleen, ovary, testis, lung and peripheral mononuclear cells. As to expression, also ubiquitous.

The protein localises to the golgi apparatus. It is found in the golgi stack membrane. Its subcellular location is the cytoplasm. The protein resides in the cytosol. It localises to the mitochondrion. The protein localises to the mitochondrion matrix. The enzyme catalyses 3-O-(beta-D-GlcA-(1-&gt;3)-beta-D-GalNAc-(1-&gt;4)-beta-D-GlcA-(1-&gt;3)-beta-D-Gal-(1-&gt;3)-beta-D-Gal-(1-&gt;4)-beta-D-Xyl)-L-seryl-[protein] + UDP-N-acetyl-alpha-D-galactosamine = 3-O-(beta-D-GalNAc-(1-&gt;4)-beta-D-GlcA-(1-&gt;3)-beta-D-GalNAc-(1-&gt;4)-beta-D-GlcA-(1-&gt;3)-beta-D-Gal-(1-&gt;3)-beta-D-Gal-(1-&gt;4)-beta-D-Xyl)-L-seryl-[protein] + UDP + H(+). It carries out the reaction 3-O-{beta-D-GlcA-(1-&gt;3)-[beta-D-GalNAc-(1-&gt;4)-beta-D-GlcA-(1-&gt;3)](n)-beta-D-GalNAc-(1-&gt;4)-beta-D-GlcA-(1-&gt;3)-beta-D-Gal-(1-&gt;3)-beta-D-Gal-(1-&gt;4)-beta-D-Xyl}-L-seryl-[protein] + UDP-N-acetyl-alpha-D-galactosamine = 3-O-{[beta-D-GalNAc-(1-&gt;4)-beta-D-GlcA-(1-&gt;3)](n+1)-beta-D-GalNAc-(1-&gt;4)-beta-D-GlcA-(1-&gt;3)-beta-D-Gal-(1-&gt;3)-beta-D-Gal-(1-&gt;4)-beta-D-Xyl}-L-seryl-[protein] + UDP + H(+). It catalyses the reaction 3-O-(beta-D-GalNAc-(1-&gt;4)-beta-D-GlcA-(1-&gt;3)-beta-D-Gal-(1-&gt;3)-beta-D-Gal-(1-&gt;4)-beta-D-Xyl)-L-seryl-[protein] + UDP-alpha-D-glucuronate = 3-O-(beta-D-GlcA-(1-&gt;3)-beta-D-GalNAc-(1-&gt;4)-beta-D-GlcA-(1-&gt;3)-beta-D-Gal-(1-&gt;3)-beta-D-Gal-(1-&gt;4)-beta-D-Xyl)-L-seryl-[protein] + UDP + H(+). The catalysed reaction is 3-O-{[beta-D-GalNAc-(1-&gt;4)-beta-D-GlcA-(1-&gt;3)](n)-beta-D-GalNAc-(1-&gt;4)-beta-D-GlcA-(1-&gt;3)-beta-D-Gal-(1-&gt;3)-beta-D-Gal-(1-&gt;4)-beta-D-Xyl}-L-seryl-[protein] + UDP-alpha-D-glucuronate = 3-O-{beta-D-GlcA-(1-&gt;3)-[beta-D-GalNAc-(1-&gt;4)-beta-D-GlcA-(1-&gt;3)](n)-beta-D-GalNAc-(1-&gt;4)-beta-D-GlcA-(1-&gt;3)-beta-D-Gal-(1-&gt;3)-beta-D-Gal-(1-&gt;4)-beta-D-Xyl}-L-seryl-[protein] + UDP + H(+). Has both beta-1,3-glucuronic acid and beta-1,4-N-acetylgalactosamine transferase activity. Transfers glucuronic acid (GlcUA) from UDP-GlcUA and N-acetylgalactosamine (GalNAc) from UDP-GalNAc to the non-reducing end of the elongating chondroitin polymer. Seems to act as a specific activating factor for CHSY1 in chondroitin polymerization. Its function is as follows. May facilitate PRKN transport into the mitochondria. In collaboration with PRKN, may enhance cell viability and protect cells from oxidative stress. The sequence is that of Chondroitin sulfate synthase 2 from Homo sapiens (Human).